The sequence spans 277 residues: Small ribosomal subunit protein uS3 (277 aa).

One can recognise a KH type-2 domain in the interval 43 to 111 (IRKVMNKDLE…QVQLNIFEVK (69 aa)). The disordered stretch occupies residues 216–277 (FEEQQAQQGN…EAAVEPETKE (62 aa)). The segment covering 264-277 (EVSKEAAVEPETKE) has biased composition (basic and acidic residues).

Belongs to the universal ribosomal protein uS3 family. As to quaternary structure, part of the 30S ribosomal subunit. Forms a tight complex with proteins S10 and S14.

Functionally, binds the lower part of the 30S subunit head. Binds mRNA in the 70S ribosome, positioning it for translation. The polypeptide is Small ribosomal subunit protein uS3 (Bifidobacterium animalis subsp. lactis (strain AD011)).